The chain runs to 331 residues: Serine/threonine-protein phosphatase 6 catalytic subunit (331 aa).

Mn(2+) contacts are provided by Asp79, His81, Asp107, and Asn139. The active-site Proton donor is the His140. Residues His189 and His264 each contribute to the Mn(2+) site.

Belongs to the PPP phosphatase family. PP-6 (PP-V) subfamily. Forms a complex composed of catalytic subunit pph-6 and regulatory subunit saps-1; the interaction increases pph-6 and saps-1 protein stability. The cofactor is Mn(2+).

Its subcellular location is the cytoplasm. The protein localises to the cell cortex. It is found in the cytoskeleton. It localises to the spindle pole. It catalyses the reaction O-phospho-L-seryl-[protein] + H2O = L-seryl-[protein] + phosphate. The catalysed reaction is O-phospho-L-threonyl-[protein] + H2O = L-threonyl-[protein] + phosphate. Functionally, catalytic subunit of protein phosphatase 6 (PP6). In complex with saps-1, promotes actomyosin contractility during cytokinesis by regulating the organization of cortical non-muscle myosin II nmy-2 and thus contributing to correct spindle positioning. Also required for the proper generation of pulling forces on spindle poles during anaphase by regulating the cortical localization of gpr-1, gpr-2 and lin-5. This Caenorhabditis elegans protein is Serine/threonine-protein phosphatase 6 catalytic subunit.